We begin with the raw amino-acid sequence, 712 residues long: Phosphomethylpyrimidine synthase (712 aa).

The interval 14–49 (AIDITAPESTIPNKSKVPNKSAESSQSTVPKAPSRR) is disordered. The segment covering 20–42 (PESTIPNKSKVPNKSAESSQSTV) has biased composition (polar residues). Substrate contacts are provided by residues N283, M312, Y341, H377, 397 to 399 (SRG), 438 to 441 (DGMR), and E477. H481 serves as a coordination point for Zn(2+). Y504 contacts substrate. H545 lines the Zn(2+) pocket. [4Fe-4S] cluster is bound by residues C625, C628, and C633.

It belongs to the ThiC family. In terms of assembly, homodimer. Requires [4Fe-4S] cluster as cofactor.

It carries out the reaction 5-amino-1-(5-phospho-beta-D-ribosyl)imidazole + S-adenosyl-L-methionine = 4-amino-2-methyl-5-(phosphooxymethyl)pyrimidine + CO + 5'-deoxyadenosine + formate + L-methionine + 3 H(+). It functions in the pathway cofactor biosynthesis; thiamine diphosphate biosynthesis. Functionally, catalyzes the synthesis of the hydroxymethylpyrimidine phosphate (HMP-P) moiety of thiamine from aminoimidazole ribotide (AIR) in a radical S-adenosyl-L-methionine (SAM)-dependent reaction. This chain is Phosphomethylpyrimidine synthase, found in Shewanella putrefaciens (strain CN-32 / ATCC BAA-453).